We begin with the raw amino-acid sequence, 373 residues long: GTPase Obg (373 aa).

The Obg domain occupies 1-158 (MFVDSVELLI…KQVRLEMKLI (158 aa)). Residues 62–83 (NHIKAENGRPGEGRKKYGRKGQ) are disordered. The span at 64 to 76 (IKAENGRPGEGRK) shows a compositional bias: basic and acidic residues. The OBG-type G domain occupies 159–362 (ADVGLVGYPN…LRYALGDFVK (204 aa)). GTP is bound by residues 165–172 (GYPNVGKS), 190–194 (FTTLT), 212–215 (DIPG), 280–283 (TKID), and 343–345 (SSV). Mg(2+)-binding residues include S172 and T192.

Belongs to the TRAFAC class OBG-HflX-like GTPase superfamily. OBG GTPase family. In terms of assembly, monomer. It depends on Mg(2+) as a cofactor.

The protein localises to the cytoplasm. An essential GTPase which binds GTP, GDP and possibly (p)ppGpp with moderate affinity, with high nucleotide exchange rates and a fairly low GTP hydrolysis rate. Plays a role in control of the cell cycle, stress response, ribosome biogenesis and in those bacteria that undergo differentiation, in morphogenesis control. In Sulfurovum sp. (strain NBC37-1), this protein is GTPase Obg.